The sequence spans 245 residues: Probable phosphatase NT01EI_1577 (245 aa).

Residues His-7, His-9, His-15, His-40, Glu-73, His-101, His-131, Asp-192, and His-194 each coordinate Zn(2+).

Belongs to the PHP family. Homotrimer. Zn(2+) is required as a cofactor.

The polypeptide is Probable phosphatase NT01EI_1577 (Edwardsiella ictaluri (strain 93-146)).